The primary structure comprises 709 residues: Potassium-transporting ATPase ATP-binding subunit (709 aa).

A run of 4 helical transmembrane segments spans residues 55 to 75 (VMLV…RDLA), 86 to 106 (GLVA…EAMA), 236 to 256 (IALN…VVTL), and 269 to 289 (VVVL…ALLS). D324 functions as the 4-aspartylphosphate intermediate in the catalytic mechanism. ATP is bound by residues D361, E365, 395 to 402 (FTAETRMS), and K417. Residues D545 and D549 each contribute to the Mg(2+) site. The next 3 helical transmembrane spans lie at 615–635 (FAII…LNVM), 643–663 (AILS…PLAL), and 688–708 (GLVV…ALGV).

This sequence belongs to the cation transport ATPase (P-type) (TC 3.A.3) family. Type IA subfamily. As to quaternary structure, the system is composed of three essential subunits: KdpA, KdpB and KdpC.

Its subcellular location is the cell membrane. The catalysed reaction is K(+)(out) + ATP + H2O = K(+)(in) + ADP + phosphate + H(+). Its function is as follows. Part of the high-affinity ATP-driven potassium transport (or Kdp) system, which catalyzes the hydrolysis of ATP coupled with the electrogenic transport of potassium into the cytoplasm. This subunit is responsible for energy coupling to the transport system and for the release of the potassium ions to the cytoplasm. This chain is Potassium-transporting ATPase ATP-binding subunit, found in Mycobacterium tuberculosis (strain ATCC 25618 / H37Rv).